We begin with the raw amino-acid sequence, 500 residues long: Tektin-like protein 1 (500 aa).

The disordered stretch occupies residues Met-1–Ala-25. At Ser-14 the chain carries Phosphoserine. Positions Met-198–Ser-229 form a coiled coil. The tract at residues Val-265 to Val-286 is disordered. Tyr-372 bears the Phosphotyrosine mark. Positions Leu-422 to Asn-448 form a coiled coil.

In terms of assembly, microtubule inner protein component of sperm flagellar doublet microtubules.

Its subcellular location is the cytoplasm. It localises to the cytoskeleton. The protein localises to the flagellum axoneme. Microtubule inner protein (MIP) part of the dynein-decorated doublet microtubules (DMTs) in sperm flagellar axoneme, which is required for motile flagellum beating. Forms an extensive interaction network cross-linking the lumen of axonemal doublet microtubules. The chain is Tektin-like protein 1 from Rattus norvegicus (Rat).